The primary structure comprises 556 residues: Formate--tetrahydrofolate ligase (556 aa).

65–72 is a binding site for ATP; it reads TPAGEGKS.

Belongs to the formate--tetrahydrofolate ligase family.

It carries out the reaction (6S)-5,6,7,8-tetrahydrofolate + formate + ATP = (6R)-10-formyltetrahydrofolate + ADP + phosphate. It participates in one-carbon metabolism; tetrahydrofolate interconversion. This chain is Formate--tetrahydrofolate ligase, found in Streptococcus agalactiae serotype Ia (strain ATCC 27591 / A909 / CDC SS700).